We begin with the raw amino-acid sequence, 273 residues long: SET domain-containing protein 9 (273 aa).

The SET domain occupies 96 to 269 (FSVAQATSSL…QGEELFSNYY (174 aa)). Tyrosine 268 is an S-adenosyl-L-methionine binding site.

This sequence belongs to the class V-like SAM-binding methyltransferase superfamily.

This chain is SET domain-containing protein 9 (SETD9), found in Pongo abelii (Sumatran orangutan).